Here is a 583-residue protein sequence, read N- to C-terminus: uncharacterized protein (583 aa).

Residues 1–38 (MGQGESIPSRQIQRDASMQAVSSESENINDSDRQNSGF) show a composition bias toward polar residues. Disordered regions lie at residues 1-39 (MGQG…SGFS), 53-124 (GLRR…AIPQ), 156-197 (TQNN…TAIG), and 362-452 (NSGS…QTDH). The span at 70–80 (GNRDRTTERSA) shows a compositional bias: basic and acidic residues. A compositionally biased stretch (low complexity) spans 88–102 (SLLNRNSPSLRSLSP). Polar residues-rich tracts occupy residues 156 to 165 (TQNNQSTLAS), 172 to 191 (VSSS…NLES), 384 to 408 (LISS…NENV), and 420 to 452 (ASTA…QTDH). The segment at 525-568 (CLVCLSNFELNDECRRLKQCNHFFHRECIDQWLTSSQNSCPLCR) adopts an RING-type zinc-finger fold. The residue at position 580 (S580) is a Phosphoserine.

The protein localises to the membrane. This is an uncharacterized protein from Schizosaccharomyces pombe (strain 972 / ATCC 24843) (Fission yeast).